Here is a 326-residue protein sequence, read N- to C-terminus: Peroxidase 6 (326 aa).

Positions 1-20 (MKSFGLCLFILVSSPCLLQA) are cleaved as a signal peptide. N-linked (GlcNAc...) asparagine glycosylation occurs at Asn21. 4 disulfides stabilise this stretch: Cys31/Cys112, Cys64/Cys69, Cys118/Cys318, and Cys197/Cys228. Catalysis depends on His62, which acts as the Proton acceptor. Ca(2+) contacts are provided by Asp63, Val66, Gly68, Asp70, and Ser72. The N-linked (GlcNAc...) asparagine glycan is linked to Asn163. Residue His190 coordinates heme b. Thr191 is a Ca(2+) binding site. 2 N-linked (GlcNAc...) asparagine glycosylation sites follow: Asn206 and Asn230. The Ca(2+) site is built by Asp242, Thr245, and Asp250. An N-linked (GlcNAc...) asparagine glycan is attached at Asn274.

It belongs to the peroxidase family. Classical plant (class III) peroxidase subfamily. Requires heme b as cofactor. It depends on Ca(2+) as a cofactor.

Its subcellular location is the secreted. It catalyses the reaction 2 a phenolic donor + H2O2 = 2 a phenolic radical donor + 2 H2O. In terms of biological role, removal of H(2)O(2), oxidation of toxic reductants, biosynthesis and degradation of lignin, suberization, auxin catabolism, response to environmental stresses such as wounding, pathogen attack and oxidative stress. These functions might be dependent on each isozyme/isoform in each plant tissue. This Arabidopsis thaliana (Mouse-ear cress) protein is Peroxidase 6 (PER6).